We begin with the raw amino-acid sequence, 465 residues long: Deoxyguanosinetriphosphate triphosphohydrolase-like protein (465 aa).

Residues 1–22 (MKWDKLLNDKRRRESGVTRSKN) are disordered. One can recognise an HD domain in the interval 63 to 252 (RLTHSMEVST…LEVADDIAYL (190 aa)).

It belongs to the dGTPase family. Type 3 subfamily.

This chain is Deoxyguanosinetriphosphate triphosphohydrolase-like protein, found in Listeria monocytogenes serovar 1/2a (strain ATCC BAA-679 / EGD-e).